The chain runs to 221 residues: Kynurenine formamidase (221 aa).

A substrate-binding site is contributed by Phe-30. His-60, His-64, and Asp-66 together coordinate Zn(2+). His-70 (proton donor/acceptor) is an active-site residue. The Zn(2+) site is built by His-172 and Glu-184.

Belongs to the Cyclase 1 superfamily. KynB family. Homodimer. Zn(2+) serves as cofactor.

The catalysed reaction is N-formyl-L-kynurenine + H2O = L-kynurenine + formate + H(+). Its pathway is amino-acid degradation; L-tryptophan degradation via kynurenine pathway; L-kynurenine from L-tryptophan: step 2/2. In terms of biological role, catalyzes the hydrolysis of N-formyl-L-kynurenine to L-kynurenine, the second step in the kynurenine pathway of tryptophan degradation. This chain is Kynurenine formamidase, found in Polaromonas sp. (strain JS666 / ATCC BAA-500).